A 288-amino-acid chain; its full sequence is Oxaloacetate decarboxylase (288 aa).

S47 lines the substrate pocket. Position 85 (D85) interacts with Mg(2+). Residues R156 and H232 each contribute to the substrate site.

Belongs to the isocitrate lyase/PEP mutase superfamily. Oxaloacetate decarboxylase family. In terms of assembly, homotetramer; dimer of dimers. The cofactor is Mg(2+).

The catalysed reaction is oxaloacetate + H(+) = pyruvate + CO2. In terms of biological role, catalyzes the decarboxylation of oxaloacetate into pyruvate. Seems to play a role in maintaining cellular concentrations of bicarbonate and pyruvate. The sequence is that of Oxaloacetate decarboxylase from Rhodopseudomonas palustris (strain BisB18).